The sequence spans 330 residues: AA9 family lytic polysaccharide monooxygenase E (330 aa).

A signal peptide spans 1 to 20 (MRSTLVTGLIAGLLSQQAAA). Cu(2+)-binding residues include His-21 and His-99. Cysteines 58 and 193 form a disulfide. 2 residues coordinate O2: His-179 and Gln-188. Position 190 (Tyr-190) interacts with Cu(2+). Positions 293 to 330 (CSVAKYQQCGGTGYTGCTSCASGSTCSAVSPPYYSQCV) constitute a CBM1 domain.

It belongs to the polysaccharide monooxygenase AA9 family. Cu(2+) is required as a cofactor.

Its subcellular location is the secreted. It catalyses the reaction [(1-&gt;4)-beta-D-glucosyl]n+m + reduced acceptor + O2 = 4-dehydro-beta-D-glucosyl-[(1-&gt;4)-beta-D-glucosyl]n-1 + [(1-&gt;4)-beta-D-glucosyl]m + acceptor + H2O.. Lytic polysaccharide monooxygenase (LPMO) that depolymerizes crystalline and amorphous polysaccharides via the oxidation of scissile alpha- or beta-(1-4)-glycosidic bonds, yielding exclusively C1 oxidation products. Catalysis by LPMOs requires the reduction of the active-site copper from Cu(II) to Cu(I) by a reducing agent and H(2)O(2) or O(2) as a cosubstrate. The sequence is that of AA9 family lytic polysaccharide monooxygenase E (gh61-5) from Neurospora crassa (strain ATCC 24698 / 74-OR23-1A / CBS 708.71 / DSM 1257 / FGSC 987).